We begin with the raw amino-acid sequence, 376 residues long: Queuine tRNA-ribosyltransferase (376 aa).

Asp93 serves as the catalytic Proton acceptor. Residues 93–97, Asp147, Gln190, and Gly217 contribute to the substrate site; that span reads DSGGF. The tract at residues 248-254 is RNA binding; sequence GVGKPDD. The active-site Nucleophile is Asp267. Zn(2+)-binding residues include Cys305, Cys307, Cys310, and His336.

This sequence belongs to the queuine tRNA-ribosyltransferase family. Homodimer. Within each dimer, one monomer is responsible for RNA recognition and catalysis, while the other monomer binds to the replacement base PreQ1. Zn(2+) serves as cofactor.

It carries out the reaction 7-aminomethyl-7-carbaguanine + guanosine(34) in tRNA = 7-aminomethyl-7-carbaguanosine(34) in tRNA + guanine. It participates in tRNA modification; tRNA-queuosine biosynthesis. Its function is as follows. Catalyzes the base-exchange of a guanine (G) residue with the queuine precursor 7-aminomethyl-7-deazaguanine (PreQ1) at position 34 (anticodon wobble position) in tRNAs with GU(N) anticodons (tRNA-Asp, -Asn, -His and -Tyr). Catalysis occurs through a double-displacement mechanism. The nucleophile active site attacks the C1' of nucleotide 34 to detach the guanine base from the RNA, forming a covalent enzyme-RNA intermediate. The proton acceptor active site deprotonates the incoming PreQ1, allowing a nucleophilic attack on the C1' of the ribose to form the product. After dissociation, two additional enzymatic reactions on the tRNA convert PreQ1 to queuine (Q), resulting in the hypermodified nucleoside queuosine (7-(((4,5-cis-dihydroxy-2-cyclopenten-1-yl)amino)methyl)-7-deazaguanosine). The sequence is that of Queuine tRNA-ribosyltransferase from Ruegeria pomeroyi (strain ATCC 700808 / DSM 15171 / DSS-3) (Silicibacter pomeroyi).